The sequence spans 367 residues: Carbamoyl-phosphate synthase (367 aa).

The ATP-grasp domain occupies 111–296 (KEFYNEIGVP…SLCELVNMAA (186 aa)). 137–186 (KMEFPVVLKQGQGQGGKDIKVAESLDDVKEYFEEFDHALCEKFIEGSEIS) serves as a coordination point for ATP. Positions 253, 267, and 269 each coordinate Mg(2+). Mn(2+)-binding residues include aspartate 253, glutamate 267, and asparagine 269.

It belongs to the small carbamoyl-phosphate synthase family. Forms homodimers and homotetramers (dimers of dimers). It depends on Mg(2+) as a cofactor. Requires Mn(2+) as cofactor.

It catalyses the reaction hydrogencarbonate + NH4(+) + 2 ATP = carbamoyl phosphate + 2 ADP + phosphate + 2 H(+). Functionally, catalyzes the synthesis of carbamoyl phosphate from ATP, ammonium and bicarbonate. Proceeds via a three-step mechanism, i.e. the phosphorylation of hydrogencarbonate to carboxyphosphate, a nucleophilic attack of ammonia on carboxyphosphate yielding carbamate, and the phosphorylation of carbamate forming carbamoyl phosphate. In M.smithii, the predominant archaeon in the human gut, one function of this enzyme may be to sequester ammonia, a scarce nutrient in the intestine which is the major source of nitrogen in M.smithii for the biosynthesis of nucleotides, amino acids, and many other metabolites. The sequence is that of Carbamoyl-phosphate synthase from Methanobrevibacter smithii (strain ATCC 35061 / DSM 861 / OCM 144 / PS).